Here is a 286-residue protein sequence, read N- to C-terminus: 33 kDa chaperonin (286 aa).

Intrachain disulfides connect C225-C227 and C258-C261.

It belongs to the HSP33 family. In terms of processing, under oxidizing conditions two disulfide bonds are formed involving the reactive cysteines. Under reducing conditions zinc is bound to the reactive cysteines and the protein is inactive.

The protein resides in the cytoplasm. Redox regulated molecular chaperone. Protects both thermally unfolding and oxidatively damaged proteins from irreversible aggregation. Plays an important role in the bacterial defense system toward oxidative stress. This chain is 33 kDa chaperonin, found in Shewanella putrefaciens (strain CN-32 / ATCC BAA-453).